The chain runs to 363 residues: Ribosomal RNA large subunit methyltransferase M (363 aa).

S-adenosyl-L-methionine is bound by residues Ser190, 223–226, Asp242, Asp262, and Asp279; that span reads CPGG. Lys308 acts as the Proton acceptor in catalysis.

This sequence belongs to the class I-like SAM-binding methyltransferase superfamily. RNA methyltransferase RlmE family. RlmM subfamily. As to quaternary structure, monomer.

It localises to the cytoplasm. It carries out the reaction cytidine(2498) in 23S rRNA + S-adenosyl-L-methionine = 2'-O-methylcytidine(2498) in 23S rRNA + S-adenosyl-L-homocysteine + H(+). Its function is as follows. Catalyzes the 2'-O-methylation at nucleotide C2498 in 23S rRNA. This is Ribosomal RNA large subunit methyltransferase M from Vibrio atlanticus (strain LGP32) (Vibrio splendidus (strain Mel32)).